A 314-amino-acid polypeptide reads, in one-letter code: Acetaldehyde dehydrogenase 2 (314 aa).

11-14 (SGNI) lines the NAD(+) pocket. Cysteine 129 functions as the Acyl-thioester intermediate in the catalytic mechanism. Residues 160 to 168 (SAGPGTRAN) and asparagine 291 contribute to the NAD(+) site.

Belongs to the acetaldehyde dehydrogenase family.

It catalyses the reaction acetaldehyde + NAD(+) + CoA = acetyl-CoA + NADH + H(+). In Rhodococcus erythropolis (strain PR4 / NBRC 100887), this protein is Acetaldehyde dehydrogenase 2.